Reading from the N-terminus, the 301-residue chain is GTPase Era (301 aa).

An Era-type G domain is found at 4–173 (KAGFVALIGK…LECISQHLSP (170 aa)). Positions 12 to 19 (GKPNAGKS) are G1. Residue 12-19 (GKPNAGKS) participates in GTP binding. Positions 38 to 42 (NATRK) are G2. Residues 64–67 (DTPG) form a G3 region. Residues 64-68 (DTPGL) and 122-125 (SKID) contribute to the GTP site. Residues 122–125 (SKID) are G4. The G5 stretch occupies residues 152–154 (LSA). A KH type-2 domain is found at 204–280 (LSDEIPYESD…FLNLQVIAQK (77 aa)).

The protein belongs to the TRAFAC class TrmE-Era-EngA-EngB-Septin-like GTPase superfamily. Era GTPase family. As to quaternary structure, monomer.

It localises to the cytoplasm. Its subcellular location is the cell inner membrane. Functionally, an essential GTPase that binds both GDP and GTP, with rapid nucleotide exchange. Plays a role in 16S rRNA processing and 30S ribosomal subunit biogenesis and possibly also in cell cycle regulation and energy metabolism. The sequence is that of GTPase Era from Helicobacter pylori (strain ATCC 700392 / 26695) (Campylobacter pylori).